Consider the following 165-residue polypeptide: Destrin (165 aa).

An N-acetylalanine modification is found at Ala2. Ser3 carries the post-translational modification Phosphoserine. One can recognise an ADF-H domain in the interval 4 to 153; that stretch reads GVQVADEVCR…NRTSIAEKLG (150 aa). Position 19 is an N6-acetyllysine (Lys19). The short motif at 30-34 is the Nuclear localization signal element; it reads KKRKK.

It belongs to the actin-binding proteins ADF family. Post-translationally, ISGylated.

Actin-depolymerizing protein. Severs actin filaments (F-actin) and binds to actin monomers (G-actin). Acts in a pH-independent manner. In Rattus norvegicus (Rat), this protein is Destrin (Dstn).